We begin with the raw amino-acid sequence, 162 residues long: Retinoic acid receptor responder protein 2 (162 aa).

The signal sequence occupies residues 1 to 20 (MWQLLLPLALGLGTMGLGRA). Disulfide bonds link C77–C87, C98–C117, and C101–C135. A propeptide spanning residues 156 to 162 (FIKALSP) is cleaved from the precursor.

In terms of processing, secreted in an inactive precursor form, prochemerin, which is proteolytically processed by a variety of extracellular proteases to generate forms with differing levels of bioactivity. For example, the removal of five amino acids results in chemerin-157, which exhibits the highest activity, while removal of six amino acids results in chemerin-156 which has slightly less activity. Some proteases are able to cleave at more than one site and chemerin forms may be sequentially processed by different enzymes to modulate activity levels. The coordinated expression and activity of chemerin-modifying enzymes is essential for regulating its bioactivation, inactivation and, consequently, biological function. Cathepsin G cleaves six C-terminal amino acids from prochemerin (chemerin-156), elastase is able to cleave five (chemerin-157), seven (chemerin-155) or ten (chemerin-152), plasmin cleaves four amino acids (chemerin-158), and tryptase cleaves four (chemerin-158) or seven (chemerin-155). Multiple cleavages might be required to fully activate chemerin, with an initial tryptase cleavage resulting in chemerin with low activity (chemerin-158), and a second cleavage by carboxypeptidase N or B producing highly active chemerin (chemerin-157).

It is found in the secreted. In terms of biological role, adipocyte-secreted protein (adipokine) that regulates adipogenesis, metabolism and inflammation through activation of the chemokine-like receptor 1 (CMKLR1). Also acts as a ligand for CMKLR2. Can also bind to C-C chemokine receptor-like 2 (CCRL2), but with a lower affinity than it does to CMKLR1 or CMKLR2. Positively regulates adipocyte differentiation, modulates the expression of adipocyte genes involved in lipid and glucose metabolism and might play a role in angiogenesis, a process essential for the expansion of white adipose tissue. Also acts as a pro-inflammatory adipokine, causing an increase in secretion of pro-inflammatory and prodiabetic adipokines, which further impair adipose tissue metabolic function and have negative systemic effects including impaired insulin sensitivity, altered glucose and lipid metabolism, and a decrease in vascular function in other tissues. Can have both pro- and anti-inflammatory properties depending on the modality of enzymatic cleavage by different classes of proteases. Acts as a chemotactic factor for leukocyte populations expressing CMKLR1, particularly immature plasmacytoid dendritic cells, but also immature myeloid DCs, macrophages and natural killer cells. Exerts an anti-inflammatory role by preventing TNF/TNFA-induced VCAM1 expression and monocytes adhesion in vascular endothelial cells. The effect is mediated via inhibiting activation of NF-kappa-B and CRK/p38 through stimulation of AKT1/NOS3 signaling and nitric oxide production. Exhibits an antimicrobial function in the skin. This Bos taurus (Bovine) protein is Retinoic acid receptor responder protein 2 (RARRES2).